The following is a 513-amino-acid chain: Na(+)/H(+) antiporter NhaB (513 aa).

Helical transmembrane passes span 23–43 (LALI…PFVA), 52–72 (IFTL…LLAI), 97–117 (LLLM…LFIF), 120–140 (LLLS…AAAF), 144–164 (FLDA…FYGI), 202–222 (LMMH…VGEP), 238–258 (FFLR…LTCL), 303–323 (AIIG…VGLI), 348–368 (TESL…AVII), 391–411 (LFYI…VGTI), 447–467 (ATPN…APLI), and 475–495 (VWMA…CVEF).

Belongs to the NhaB Na(+)/H(+) (TC 2.A.34) antiporter family.

Its subcellular location is the cell inner membrane. It catalyses the reaction 2 Na(+)(in) + 3 H(+)(out) = 2 Na(+)(out) + 3 H(+)(in). Functionally, na(+)/H(+) antiporter that extrudes sodium in exchange for external protons. The chain is Na(+)/H(+) antiporter NhaB from Escherichia coli (strain 55989 / EAEC).